A 257-amino-acid polypeptide reads, in one-letter code: Adenylate kinase (257 aa).

51–56 (GAGKGT) is an ATP binding site. The NMP stretch occupies residues 71 to 100 (ATGDMLRSQVAKKTELGKEAKKIMDQGGLV). AMP-binding positions include Thr72, Arg77, 98–100 (GLV), 127–130 (GFPR), and Gln134. The tract at residues 168–205 (GRLVHPASGRSYHKIFNPPKQEMKDDITGEPLIQRSDD) is LID. ATP contacts are provided by residues Arg169 and 178–179 (SY). Residues Arg202 and Arg213 each coordinate AMP. An ATP-binding site is contributed by Gln241.

Belongs to the adenylate kinase family. AK2 subfamily. In terms of assembly, monomer.

The protein resides in the cytoplasm. It is found in the cytosol. The protein localises to the mitochondrion intermembrane space. It carries out the reaction AMP + ATP = 2 ADP. Functionally, catalyzes the reversible transfer of the terminal phosphate group between ATP and AMP. Plays an important role in cellular energy homeostasis and in adenine nucleotide metabolism. Adenylate kinase activity is critical for regulation of the phosphate utilization and the AMP de novo biosynthesis pathways. The chain is Adenylate kinase (adk1) from Aspergillus terreus (strain NIH 2624 / FGSC A1156).